Reading from the N-terminus, the 69-residue chain is Conotoxin Eb6.9 (69 aa).

An N-terminal signal peptide occupies residues 1 to 17; sequence VLIIAVLFLTACQLTTA. The propeptide occupies 18 to 41; sequence ETYSRGRQKHRARRSTDKNSKWTR. 3 cysteine pairs are disulfide-bonded: cysteine 43–cysteine 57, cysteine 50–cysteine 61, and cysteine 56–cysteine 68.

It belongs to the conotoxin O1 superfamily. As to expression, expressed by the venom duct.

The protein localises to the secreted. This Conus ebraeus (Hebrew cone) protein is Conotoxin Eb6.9 (E1).